A 302-amino-acid chain; its full sequence is Probable 2-(5''-triphosphoribosyl)-3'-dephosphocoenzyme-A synthase (302 aa).

Belongs to the CitG/MdcB family.

The enzyme catalyses 3'-dephospho-CoA + ATP = 2'-(5''-triphospho-alpha-D-ribosyl)-3'-dephospho-CoA + adenine. In Albidiferax ferrireducens (strain ATCC BAA-621 / DSM 15236 / T118) (Rhodoferax ferrireducens), this protein is Probable 2-(5''-triphosphoribosyl)-3'-dephosphocoenzyme-A synthase.